The chain runs to 150 residues: MKVIFLEDVKGKGKRGEVKNVSDGYAQNFLIKNGKAKAATSAAVSELKGQKKAEAKHEAEILADAEKLKTVLENDKTVVEIKAKAGKDGRLFGSIPNKQIATALEKQYKIKIDKRKIELSNPIRSMGYTNVPVKLHQKVTATIRVHVAEQ.

This sequence belongs to the bacterial ribosomal protein bL9 family.

Its function is as follows. Binds to the 23S rRNA. This chain is Large ribosomal subunit protein bL9, found in Pediococcus pentosaceus (strain ATCC 25745 / CCUG 21536 / LMG 10740 / 183-1w).